Consider the following 114-residue polypeptide: DNA-binding protein rrnAC3180 (114 aa).

Residues Met1–Glu11 are compositionally biased toward acidic residues. Residues Met1–Ala45 form a disordered region. Residues Glu12–Lys22 show a composition bias toward basic and acidic residues. Positions Gln32–Ala45 are enriched in low complexity.

The protein belongs to the PDCD5 family.

The protein is DNA-binding protein rrnAC3180 of Haloarcula marismortui (strain ATCC 43049 / DSM 3752 / JCM 8966 / VKM B-1809) (Halobacterium marismortui).